Here is a 1370-residue protein sequence, read N- to C-terminus: DNA-directed RNA polymerase subunit beta (1370 aa).

The protein belongs to the RNA polymerase beta chain family. The RNAP catalytic core consists of 2 alpha, 1 beta, 1 beta' and 1 omega subunit. When a sigma factor is associated with the core the holoenzyme is formed, which can initiate transcription.

It catalyses the reaction RNA(n) + a ribonucleoside 5'-triphosphate = RNA(n+1) + diphosphate. Functionally, DNA-dependent RNA polymerase catalyzes the transcription of DNA into RNA using the four ribonucleoside triphosphates as substrates. This is DNA-directed RNA polymerase subunit beta from Bordetella pertussis (strain Tohama I / ATCC BAA-589 / NCTC 13251).